The chain runs to 147 residues: Hemoglobin subunit epsilon (147 aa).

The Globin domain maps to 3–147 (HFTAEEKATV…VANALAHKYH (145 aa)). Residues Ser14 and Ser51 each carry the phosphoserine modification. The heme b site is built by His64 and His93.

This sequence belongs to the globin family. In terms of assembly, heterotetramer of two alpha chains and two epsilon chains in early embryonic hemoglobin Gower-2; two zeta chains and two epsilon chains in early embryonic hemoglobin Gower-1. Red blood cells.

Functionally, the epsilon chain is a beta-type chain of early mammalian embryonic hemoglobin. This chain is Hemoglobin subunit epsilon (HBE1), found in Bradypus tridactylus (Pale-throated three-toed sloth).